A 346-amino-acid chain; its full sequence is Extracellular protease (346 aa).

A signal peptide spans 1 to 21; sequence MMKATPIALLLAGVLASPLCA. Residue H296 coordinates Zn(2+). Residue E297 is part of the active site. Zn(2+)-binding residues include H300 and D309.

It belongs to the peptidase M35 family. It depends on Zn(2+) as a cofactor.

Heat-labile protease. The protein is Extracellular protease of Aeromonas hydrophila.